We begin with the raw amino-acid sequence, 312 residues long: Pyridoxal kinase (312 aa).

Position 1 is an N-acetylmethionine (Met-1). Residues Ser-12 and Thr-47 each coordinate pyridoxal 5'-phosphate. Pyridoxamine is bound by residues Ser-12 and Thr-47. Residue Ser-59 is modified to Phosphoserine. Asp-113 contributes to the K(+) binding site. Tyr-127 lines the pyridoxal 5'-phosphate pocket. Thr-148 lines the K(+) pocket. Asn-150 lines the ADP pocket. An ATP-binding site is contributed by Asn-150. A Phosphoserine modification is found at Ser-164. Thr-186 is a K(+) binding site. 186 to 187 is an ADP binding site; it reads TS. 186–187 provides a ligand contact to ATP; it reads TS. Ser-213 carries the phosphoserine modification. Residues 223 to 226 and 233 to 234 contribute to the ADP site; these read MHKV and TG. Residues 223–226 and 233–234 contribute to the ATP site; these read MHKV and TG. 232-235 is a binding site for pyridoxal 5'-phosphate; the sequence is GTGD. Pyridoxamine is bound at residue Asp-235. The active-site Proton acceptor is Asp-235. Ser-285 bears the Phosphoserine mark.

Belongs to the pyridoxine kinase family. Homodimer. The cofactor is Zn(2+). Mg(2+) serves as cofactor. Ubiquitous.

The protein resides in the cytoplasm. It localises to the cytosol. It carries out the reaction pyridoxal + ATP = pyridoxal 5'-phosphate + ADP + H(+). It catalyses the reaction pyridoxamine + ATP = pyridoxamine 5'-phosphate + ADP + H(+). The enzyme catalyses pyridoxine + ATP = pyridoxine 5'-phosphate + ADP + H(+). The protein operates within cofactor metabolism; pyridoxal 5'-phosphate salvage; pyridoxal 5'-phosphate from pyridoxal: step 1/1. It participates in cofactor metabolism; pyridoxal 5'-phosphate salvage; pyridoxine 5'-phosphate from pyridoxine: step 1/1. Its pathway is cofactor metabolism; pyridoxal 5'-phosphate salvage; pyridoxamine 5'-phosphate from pyridoxamine: step 1/1. Its activity is regulated as follows. Activated by K(+). Activity is increased in the presence of Na(+). In terms of biological role, catalyzes the phosphorylation of the dietary vitamin B6 vitamers pyridoxal (PL), pyridoxine (PN) and pyridoxamine (PM) to form pyridoxal 5'-phosphate (PLP), pyridoxine 5'-phosphate (PNP) and pyridoxamine 5'-phosphate (PMP), respectively. PLP is the active form of vitamin B6, and acts as a cofactor for over 140 different enzymatic reactions. The sequence is that of Pyridoxal kinase (PDXK) from Ovis aries (Sheep).